The chain runs to 127 residues: Large ribosomal subunit protein eL32 (127 aa).

The span at 37 to 48 shows a compositional bias: basic and acidic residues; it reads KWRKPKGTDSKM. The disordered stretch occupies residues 37–65; sequence KWRKPKGTDSKMRVKLKGKARSPSIGWSS.

It belongs to the eukaryotic ribosomal protein eL32 family.

The chain is Large ribosomal subunit protein eL32 from Thermococcus sibiricus (strain DSM 12597 / MM 739).